The sequence spans 254 residues: tRNA 2'-phosphotransferase 1 (254 aa).

M1 bears the N-acetylmethionine mark. Disordered regions lie at residues 1 to 30 and 225 to 254; these read MNSFGGRRRETAGPKGRRAHRPPQDQDRDV and RKPLSLAGNEEKEHQRDSKHSSRGRGMTQQ. Basic and acidic residues predominate over residues 233-244; it reads NEEKEHQRDSKH.

Belongs to the KptA/TPT1 family.

The catalysed reaction is 2'-phospho-[ligated tRNA] + NAD(+) = mature tRNA + ADP-alpha-D-ribose 1'',2''-cyclic phosphate + nicotinamide. Its function is as follows. Catalyzes the last step of tRNA splicing, the transfer of the splice junction 2'-phosphate from ligated tRNA to NAD to produce ADP-ribose 1''-2'' cyclic phosphate. This is tRNA 2'-phosphotransferase 1 (TRPT1) from Bos taurus (Bovine).